We begin with the raw amino-acid sequence, 878 residues long: Aconitate hydratase A (878 aa).

3 residues coordinate [4Fe-4S] cluster: Cys-426, Cys-492, and Cys-495.

The protein belongs to the aconitase/IPM isomerase family. In terms of assembly, monomer. Requires [4Fe-4S] cluster as cofactor.

The catalysed reaction is citrate = D-threo-isocitrate. It carries out the reaction (2S,3R)-3-hydroxybutane-1,2,3-tricarboxylate = 2-methyl-cis-aconitate + H2O. It participates in carbohydrate metabolism; tricarboxylic acid cycle; isocitrate from oxaloacetate: step 2/2. It functions in the pathway organic acid metabolism; propanoate degradation. Involved in the catabolism of short chain fatty acids (SCFA) via the tricarboxylic acid (TCA)(acetyl degradation route) and probably the 2-methylcitrate cycle I (propionate degradation route). Catalyzes the reversible isomerization of citrate to isocitrate via cis-aconitate. Could catalyze the hydration of 2-methyl-cis-aconitate to yield (2R,3S)-2-methylisocitrate. The apo form of AcnA functions as a RNA-binding regulatory protein. This Rickettsia conorii (strain ATCC VR-613 / Malish 7) protein is Aconitate hydratase A (acnA).